We begin with the raw amino-acid sequence, 190 residues long: Large ribosomal subunit protein bL9 (190 aa).

This sequence belongs to the bacterial ribosomal protein bL9 family.

In terms of biological role, binds to the 23S rRNA. The protein is Large ribosomal subunit protein bL9 of Methylorubrum populi (strain ATCC BAA-705 / NCIMB 13946 / BJ001) (Methylobacterium populi).